The chain runs to 257 residues: MVKPTQAKRYASLGAIALLTTSLVVASPNPALAMHISEGFLPLGWAVGWWLAFLPFLAWGLWSLQQQIKQHSESVLLVALAGAYAFVVSSLKIPSVTGSCSHPIGIALGAILFRPPLMAVLGTLVLLFQSLLIAHGGLTTLGANAFSMAVVGPWLAWLTYCGVSRLRVKPAIALFAASFISNVGTYTLTSLQLALAFPDSVGGLATSFAKFGTLFAVTQIPLAISEGLLTVLVWNWLTTYCVAELQALRLLPQEELP.

The signal sequence occupies residues 1–33 (MVKPTQAKRYASLGAIALLTTSLVVASPNPALA). 6 helical membrane passes run 39 to 59 (GFLP…FLAW), 74 to 94 (SVLL…LKIP), 117 to 137 (LMAV…AHGG), 138 to 158 (LTTL…LAWL), 171 to 191 (AIAL…LTSL), and 214 to 234 (LFAV…VLVW).

The protein belongs to the CbiM family. As to quaternary structure, forms an energy-coupling factor (ECF) transporter complex composed of an ATP-binding protein (A component, CbiO), a transmembrane protein (T component, CbiQ) and 2 possible substrate-capture proteins (S components, CbiM and CbiN) of unknown stoichimetry.

Its subcellular location is the cell inner membrane. Its pathway is cofactor biosynthesis; adenosylcobalamin biosynthesis. In terms of biological role, part of the energy-coupling factor (ECF) transporter complex CbiMNOQ involved in cobalt import. This chain is Cobalt transport protein CbiM, found in Thermosynechococcus vestitus (strain NIES-2133 / IAM M-273 / BP-1).